The chain runs to 182 residues: MEQFHGTTIISVRRKTPEGYSVAIGGDGQVTLGNIVVKGTARKVRKLYHGKVLAGFAGATADAFTLFERFEAKLEKHQGHLVRAAIELTKDWRTDRVLRRLEAMLAVADSEASLIITGNGDVLEPENGIVTIGSGGAYAQAAAMALLNHTEMSAPEIVKKSLEIAAEICIYTNMSHTIETLP.

Thr7 is an active-site residue. Na(+) contacts are provided by Ala166, Cys169, and Thr172.

The protein belongs to the peptidase T1B family. HslV subfamily. As to quaternary structure, a double ring-shaped homohexamer of HslV is capped on each side by a ring-shaped HslU homohexamer. The assembly of the HslU/HslV complex is dependent on binding of ATP.

The protein localises to the cytoplasm. The catalysed reaction is ATP-dependent cleavage of peptide bonds with broad specificity.. Allosterically activated by HslU binding. Functionally, protease subunit of a proteasome-like degradation complex believed to be a general protein degrading machinery. The sequence is that of ATP-dependent protease subunit HslV from Albidiferax ferrireducens (strain ATCC BAA-621 / DSM 15236 / T118) (Rhodoferax ferrireducens).